The sequence spans 86 residues: Putative membrane protein insertion efficiency factor (86 aa).

The protein belongs to the UPF0161 family.

Its subcellular location is the cell inner membrane. Its function is as follows. Could be involved in insertion of integral membrane proteins into the membrane. The protein is Putative membrane protein insertion efficiency factor of Cellvibrio japonicus (strain Ueda107) (Pseudomonas fluorescens subsp. cellulosa).